The sequence spans 499 residues: Serine carboxypeptidase-like 34 (499 aa).

Positions Met1 to Ala25 are cleaved as a signal peptide. Residues Asn73, Asn124, and Asn158 are each glycosylated (N-linked (GlcNAc...) asparagine). Disulfide bonds link Cys106–Cys383, Cys269–Cys280, and Cys304–Cys351. Residue Ser200 is part of the active site. Asn310, Asn372, and Asn375 each carry an N-linked (GlcNAc...) asparagine glycan. Residues Asp419 and His471 contribute to the active site.

This sequence belongs to the peptidase S10 family. As to expression, ubiquitous.

Its subcellular location is the secreted. Functionally, probable carboxypeptidase. The protein is Serine carboxypeptidase-like 34 (SCPL34) of Arabidopsis thaliana (Mouse-ear cress).